We begin with the raw amino-acid sequence, 375 residues long: 1-deoxy-D-xylulose 5-phosphate reductoisomerase (375 aa).

6 residues coordinate NADPH: threonine 12, glycine 13, serine 14, isoleucine 15, asparagine 39, and asparagine 115. Lysine 116 serves as a coordination point for 1-deoxy-D-xylulose 5-phosphate. Glutamate 117 contributes to the NADPH binding site. Aspartate 141 provides a ligand contact to Mn(2+). 4 residues coordinate 1-deoxy-D-xylulose 5-phosphate: serine 142, glutamate 143, serine 163, and histidine 186. Mn(2+) is bound at residue glutamate 143. Residue glycine 192 participates in NADPH binding. 1-deoxy-D-xylulose 5-phosphate-binding residues include serine 199, asparagine 204, lysine 205, and glutamate 208. Residue glutamate 208 participates in Mn(2+) binding.

It belongs to the DXR family. The cofactor is Mg(2+). Mn(2+) serves as cofactor.

It carries out the reaction 2-C-methyl-D-erythritol 4-phosphate + NADP(+) = 1-deoxy-D-xylulose 5-phosphate + NADPH + H(+). Its pathway is isoprenoid biosynthesis; isopentenyl diphosphate biosynthesis via DXP pathway; isopentenyl diphosphate from 1-deoxy-D-xylulose 5-phosphate: step 1/6. Functionally, catalyzes the NADPH-dependent rearrangement and reduction of 1-deoxy-D-xylulose-5-phosphate (DXP) to 2-C-methyl-D-erythritol 4-phosphate (MEP). The sequence is that of 1-deoxy-D-xylulose 5-phosphate reductoisomerase from Thermotoga neapolitana (strain ATCC 49049 / DSM 4359 / NBRC 107923 / NS-E).